The primary structure comprises 143 residues: Nucleoside diphosphate kinase (143 aa).

ATP contacts are provided by lysine 11, phenylalanine 59, arginine 87, threonine 93, arginine 104, and asparagine 114. Histidine 117 acts as the Pros-phosphohistidine intermediate in catalysis.

It belongs to the NDK family. As to quaternary structure, homotetramer. Mg(2+) is required as a cofactor.

Its subcellular location is the cytoplasm. It catalyses the reaction a 2'-deoxyribonucleoside 5'-diphosphate + ATP = a 2'-deoxyribonucleoside 5'-triphosphate + ADP. It carries out the reaction a ribonucleoside 5'-diphosphate + ATP = a ribonucleoside 5'-triphosphate + ADP. Major role in the synthesis of nucleoside triphosphates other than ATP. The ATP gamma phosphate is transferred to the NDP beta phosphate via a ping-pong mechanism, using a phosphorylated active-site intermediate. The chain is Nucleoside diphosphate kinase from Escherichia coli O7:K1 (strain IAI39 / ExPEC).